A 370-amino-acid chain; its full sequence is Leucine-rich repeat-containing protein 19 (370 aa).

A signal peptide spans 1-24 (MKVTGITILFWPLSMILLSDKIQS). At 25 to 270 (SKREVQCNFT…SEHEPLGKSW (246 aa)) the chain is on the extracellular side. Residues N32, N37, N62, and N95 are each glycosylated (N-linked (GlcNAc...) asparagine). LRR repeat units follow at residues 46–71 (KKDVTILDLSYNQITLNGTDTRVLQT), 72–95 (YFLLTELYLIENKVTILHNNGFGN), 96–119 (LSSLEILNICRNSIYVIQQGAFLG), 120–143 (LNKLKQLYLCQNKIEQLNADVFVP), and 145–168 (RSLKLLNLQGNLISYLDVPPLFHL). One can recognise an LRRCT domain in the interval 176 to 227 (NLWNCSCSLFNLQNWLNTSNVTLENENITMCSYPNSLQSYNIKTVPHKAECH). N-linked (GlcNAc...) asparagine glycans are attached at residues N179, N192, N195, N202, N251, and N256. A helical membrane pass occupies residues 271 to 291 (AFLVGVVVTVLTTSLLIFIAI). Topologically, residues 292-370 (KCPIWYNILL…IDIHELCEEN (79 aa)) are cytoplasmic.

As to quaternary structure, interacts with TRAF2 and TRAF6. In terms of tissue distribution, expressed in renal collecting duct epithelial cells.

Its subcellular location is the membrane. Activated by TLR ligands such as LPS, bacterial DNA and peptidoglycan. Functionally, pathogen-recognition receptor which mediates the activation of TRAF2- and TRAF6 NF-kappa-B signaling pathways and induces the expression of pro-inflammatory cytokines. In kidney, prevents infection by uropathogenic bacteria by inducing the production of cytokines, chemokines and antimicrobial substances. In gut, involved in host-microbiota interactions, plays a critical role in promoting the recruitment of immune cells and intestinal inflammation. This is Leucine-rich repeat-containing protein 19 from Homo sapiens (Human).